A 305-amino-acid chain; its full sequence is MLNFSDRLIESIKKKNSVLIAGIDTSIENIPDYFIKRFYDKEKSEIDNLKTILFEYIRRIIDAVEENVVGVKFQAAFFEQYSYHGFEVLHKLCEYTKNKKLVVIFDGKRNDISSSAKGYSNAYLGETPVFGKKMRFFEFDAITTNPYLGQDGIKPFVEDCERFKKGLFVLVKTSNPSSADFQDLMVEDKYLFEVVAEKVYEWGKNCIGKEGYSDVGAVVGATQPEAAKRIREILPNSFFLVPGIGVQGGKIEDLKYFVDSNNMGIIVNSSRDIIYAYKNYVHSDFEKSSYLASKNIKESINAAIS.

K108 serves as the catalytic Proton donor.

Belongs to the OMP decarboxylase family. Type 2 subfamily.

The catalysed reaction is orotidine 5'-phosphate + H(+) = UMP + CO2. It participates in pyrimidine metabolism; UMP biosynthesis via de novo pathway; UMP from orotate: step 2/2. This Caldicellulosiruptor bescii (strain ATCC BAA-1888 / DSM 6725 / KCTC 15123 / Z-1320) (Anaerocellum thermophilum) protein is Orotidine 5'-phosphate decarboxylase.